The chain runs to 330 residues: tRNA-modifying protein YgfZ (330 aa).

Residues W28 and W192 each coordinate folate.

The protein belongs to the tRNA-modifying YgfZ family.

The protein resides in the cytoplasm. Folate-binding protein involved in regulating the level of ATP-DnaA and in the modification of some tRNAs. It is probably a key factor in regulatory networks that act via tRNA modification, such as initiation of chromosomal replication. This Blochmanniella pennsylvanica (strain BPEN) protein is tRNA-modifying protein YgfZ.